A 582-amino-acid chain; its full sequence is PX domain-containing protein kinase-like protein (582 aa).

A PX domain is found at 14–126; sequence LDDTVPLTAA…KFLDPNNYSA (113 aa). One can recognise a Protein kinase domain in the interval 88-481; the sequence is FIAERQRGLQ…VENSEEQPVK (394 aa). The disordered stretch occupies residues 433 to 550; sequence EQKQIHQHRR…APFLPQPVNG (118 aa). Basic residues-rich tracts occupy residues 437–448 and 457–469; these read IHQHRRLTRAQS and KRRKILARKKSKR. Residues 483–514 are compositionally biased toward low complexity; that stretch reads SNSNNSAGSGASSPLTSPSSPTPPSTAGLSSA. Pro residues predominate over residues 515 to 531; it reads LPPPPPPPPPPPPPAGP. In terms of domain architecture, WH2 spans 548–567; sequence VNGVNRGALLSSIQNFQKGT.

It belongs to the protein kinase superfamily. In terms of tissue distribution, isoform 1 is present in all tissues examined. Isoform 2 is found in all tissues except skeletal muscle and very low levels in spleen. Both isoforms are widely expressed throughout the nervous system however levels of isoform 2 are higher in purified hippocampal and cortical neurons whereas glial cells express more isoform 1 than isoform 2.

Its subcellular location is the cytoplasm. The protein resides in the cell membrane. Binds to and modulates brain Na,K-ATPase subunits ATP1B1 and ATP1B3 and may thereby participate in the regulation of electrical excitability and synaptic transmission. May not display kinase activity. The sequence is that of PX domain-containing protein kinase-like protein from Mus musculus (Mouse).